Here is a 169-residue protein sequence, read N- to C-terminus: Large ribosomal subunit protein uL5 (169 aa).

Belongs to the universal ribosomal protein uL5 family. In terms of assembly, part of the 50S ribosomal subunit; contacts the 5S rRNA and probably tRNA. Forms a bridge to the 30S subunit in the 70S ribosome.

In terms of biological role, this is one of the proteins that bind and probably mediate the attachment of the 5S RNA into the large ribosomal subunit, where it forms part of the central protuberance. In the 70S ribosome it contacts protein S13 of the 30S subunit (bridge B1b), connecting the 2 subunits; this bridge is implicated in subunit movement. May contact the P site tRNA; the 5S rRNA and some of its associated proteins might help stabilize positioning of ribosome-bound tRNAs. This Methanosarcina barkeri (strain Fusaro / DSM 804) protein is Large ribosomal subunit protein uL5.